The following is a 460-amino-acid chain: Beta-1,3-xylanase TXYA (460 aa).

The signal sequence occupies residues 1 to 22; sequence MKKLAKMISVATLGACAFQAHA. The GH26 domain occupies 23–337; the sequence is LDGKLVPDQG…LSDPKFIRHS (315 aa). The Proton donor role is filled by E138. E234 acts as the Nucleophile in catalysis. The interval 347 to 371 is disordered; that stretch reads GNSDGGNGGDNGGDNGGDNGGETPE. The segment covering 348-366 has biased composition (gly residues); the sequence is NSDGGNGGDNGGDNGGDNG. Residues 368-460 are carbohydrate binding module (CBM); that stretch reads ETPENCTDDF…TVTFTNQVCN (93 aa). 2 cysteine pairs are disulfide-bonded: C373–C459 and C404–C409.

The protein belongs to the glycosyl hydrolase 26 family.

It catalyses the reaction Random hydrolysis of (1-&gt;3)-beta-D-glycosidic linkages in (1-&gt;3)-beta-D-xylans.. With respect to regulation, completely inhibited by Cu(2+), Hg(2+) and N-bromosuccinimide. Strongly inhibited by Ag(+), Zn(2+) and Pb(2+). Moderately inhibited by Fe(3+), Al(3+), Mn(2+), dithiothreitol and p-chloromercuribenzoic acid. Slightly activated by Mg(2+) and Ca(2+). Unaffected by Na(+), K(+), Ba(2+), EDTA, iodoacetic acid and N-ethylmalaimide. Functionally, catalyzes the hydrolysis of beta-1,3-xylan into oligosaccharides, mainly xylotriose and xylobiose with smaller amounts of xylotetraose, xylose, xylopentaose and xylohexaose. Weakly active toward beta-1,3-xylotriose, yielding xylose and xylobiose. Converts beta-1,3-xylotetraose into xylotriose, xylobiose and xylose. Converts beta-1,3-xylopentaose into xylotetraose, xylotriose, xylobiose and xylose. Does not hydrolyze xylobiose, p-nitrophenyl-beta-xyloside, beta-1,4-xylan, curdlan or carboxymethylcellulose. The protein is Beta-1,3-xylanase TXYA of Vibrio sp.